Consider the following 149-residue polypeptide: Alpha-crystallin A chain (149 aa).

Residues 28–138 (LLRGFMDSGI…SHSERPIPVS (111 aa)) enclose the sHSP domain. Zn(2+) is bound by residues His55, His76, Glu78, His83, His91, and His130. The disordered stretch occupies residues 125-149 (NLVSSHSERPIPVSREEKPTSAPSS). Over residues 130–143 (HSERPIPVSREEKP) the composition is skewed to basic and acidic residues. The O-linked (GlcNAc) serine glycan is linked to Ser138.

This sequence belongs to the small heat shock protein (HSP20) family. In terms of assembly, heteropolymer composed of three CRYAA and one CRYAB subunits. Inter-subunit bridging via zinc ions enhances stability, which is crucial as there is no protein turn over in the lens. Can also form homodimers and homotetramers (dimers of dimers) which serve as the building blocks of homooligomers. Within homooligomers, the zinc-binding motif is created from residues of 3 different molecules. His-76 and Glu-78 from one molecule are ligands of the zinc ion, and His-83 and His-130 residues from additional molecules complete the site with tetrahedral coordination geometry.

It localises to the cytoplasm. The protein resides in the nucleus. Functionally, contributes to the transparency and refractive index of the lens. May act as a chaperone, preventing aggregation of various proteins under a wide range of stress conditions. This Rana temporaria (European common frog) protein is Alpha-crystallin A chain (CRYAA).